Reading from the N-terminus, the 588-residue chain is 2-isopropylmalate synthase (588 aa).

The 275-residue stretch at P40–D314 folds into the Pyruvate carboxyltransferase domain. Mg(2+) is bound by residues D49, H253, H255, and N289. Residues A456–V588 form a regulatory domain region.

Belongs to the alpha-IPM synthase/homocitrate synthase family. LeuA type 2 subfamily. In terms of assembly, homodimer. Mg(2+) serves as cofactor.

Its subcellular location is the cytoplasm. It catalyses the reaction 3-methyl-2-oxobutanoate + acetyl-CoA + H2O = (2S)-2-isopropylmalate + CoA + H(+). Its pathway is amino-acid biosynthesis; L-leucine biosynthesis; L-leucine from 3-methyl-2-oxobutanoate: step 1/4. In terms of biological role, catalyzes the condensation of the acetyl group of acetyl-CoA with 3-methyl-2-oxobutanoate (2-ketoisovalerate) to form 3-carboxy-3-hydroxy-4-methylpentanoate (2-isopropylmalate). This Clavibacter sepedonicus (Clavibacter michiganensis subsp. sepedonicus) protein is 2-isopropylmalate synthase.